We begin with the raw amino-acid sequence, 144 residues long: Large ribosomal subunit protein uL16m (144 aa).

The protein belongs to the universal ribosomal protein uL16 family.

It is found in the mitochondrion. This is Large ribosomal subunit protein uL16m (mrpl16) from Dictyostelium discoideum (Social amoeba).